Consider the following 358-residue polypeptide: Peptide chain release factor 1 (358 aa).

Gln-233 is modified (N5-methylglutamine).

The protein belongs to the prokaryotic/mitochondrial release factor family. Post-translationally, methylated by PrmC. Methylation increases the termination efficiency of RF1.

Its subcellular location is the cytoplasm. Functionally, peptide chain release factor 1 directs the termination of translation in response to the peptide chain termination codons UAG and UAA. This chain is Peptide chain release factor 1, found in Staphylococcus carnosus (strain TM300).